The sequence spans 244 residues: 3-oxoacyl-[acyl-carrier-protein] reductase FabG (244 aa).

NADP(+) is bound by residues Gly9–Arg12, Asn60–Val61, and Asn87. Residue Ser139 participates in substrate binding. The Proton acceptor role is filled by Tyr152. Residues Tyr152–Lys156 and Ile185 each bind NADP(+).

Belongs to the short-chain dehydrogenases/reductases (SDR) family. As to quaternary structure, homotetramer.

The catalysed reaction is a (3R)-hydroxyacyl-[ACP] + NADP(+) = a 3-oxoacyl-[ACP] + NADPH + H(+). Its pathway is lipid metabolism; fatty acid biosynthesis. Catalyzes the NADPH-dependent reduction of beta-ketoacyl-ACP substrates to beta-hydroxyacyl-ACP products, the first reductive step in the elongation cycle of fatty acid biosynthesis. The protein is 3-oxoacyl-[acyl-carrier-protein] reductase FabG (fabG) of Staphylococcus epidermidis (strain ATCC 35984 / DSM 28319 / BCRC 17069 / CCUG 31568 / BM 3577 / RP62A).